Consider the following 264-residue polypeptide: uncharacterized protein (264 aa).

The interval 57-264 (RPPASPCPPR…VYPHPHLTAT (208 aa)) is disordered. The span at 140-153 (GKARRSPGRRRHPH) shows a compositional bias: basic residues. Residues 154–165 (SSFPQASSPSSP) show a composition bias toward low complexity.

This is an uncharacterized protein from Homo sapiens (Human).